The sequence spans 425 residues: Argininosuccinate synthase (425 aa).

ATP contacts are provided by residues 7–15 (AYSGGLDTS) and alanine 33. Tyrosine 84 is a binding site for L-citrulline. Glycine 114 lines the ATP pocket. 3 residues coordinate L-aspartate: threonine 116, asparagine 120, and aspartate 121. Position 120 (asparagine 120) interacts with L-citrulline. Residues arginine 124, serine 177, serine 186, glutamate 267, and tyrosine 279 each coordinate L-citrulline.

This sequence belongs to the argininosuccinate synthase family. Type 1 subfamily. Homotetramer.

The protein localises to the cytoplasm. The enzyme catalyses L-citrulline + L-aspartate + ATP = 2-(N(omega)-L-arginino)succinate + AMP + diphosphate + H(+). It participates in amino-acid biosynthesis; L-arginine biosynthesis; L-arginine from L-ornithine and carbamoyl phosphate: step 2/3. The protein is Argininosuccinate synthase of Pseudothermotoga lettingae (strain ATCC BAA-301 / DSM 14385 / NBRC 107922 / TMO) (Thermotoga lettingae).